A 147-amino-acid polypeptide reads, in one-letter code: Large ribosomal subunit protein uL15 (147 aa).

It belongs to the universal ribosomal protein uL15 family. In terms of assembly, part of the 50S ribosomal subunit.

Binds to the 23S rRNA. The protein is Large ribosomal subunit protein uL15 of Blochmanniella floridana.